Consider the following 139-residue polypeptide: ATP synthase epsilon chain (139 aa).

Belongs to the ATPase epsilon chain family. In terms of assembly, F-type ATPases have 2 components, CF(1) - the catalytic core - and CF(0) - the membrane proton channel. CF(1) has five subunits: alpha(3), beta(3), gamma(1), delta(1), epsilon(1). CF(0) has three main subunits: a, b and c.

The protein resides in the cell membrane. Functionally, produces ATP from ADP in the presence of a proton gradient across the membrane. The chain is ATP synthase epsilon chain from Roseiflexus sp. (strain RS-1).